Here is a 67-residue protein sequence, read N- to C-terminus: ATP synthase F(0) complex subunit 8 (67 aa).

The helical transmembrane segment at 8–24 (TWFTTVLASSITLFILM) threads the bilayer. Lys-54 carries the post-translational modification N6-acetyllysine; alternate. Lys-54 carries the N6-succinyllysine; alternate modification. Lys-57 bears the N6-acetyllysine mark.

Belongs to the ATPase protein 8 family. In terms of assembly, component of the ATP synthase complex composed at least of ATP5F1A/subunit alpha, ATP5F1B/subunit beta, ATP5MC1/subunit c (homooctomer), MT-ATP6/subunit a, MT-ATP8/subunit 8, ATP5ME/subunit e, ATP5MF/subunit f, ATP5MG/subunit g, ATP5MK/subunit k, ATP5MJ/subunit j, ATP5F1C/subunit gamma, ATP5F1D/subunit delta, ATP5F1E/subunit epsilon, ATP5PF/subunit F6, ATP5PB/subunit b, ATP5PD/subunit d, ATP5PO/subunit OSCP. ATP synthase complex consists of a soluble F(1) head domain (subunits alpha(3) and beta(3)) - the catalytic core - and a membrane F(0) domain - the membrane proton channel (subunits c, a, 8, e, f, g, k and j). These two domains are linked by a central stalk (subunits gamma, delta, and epsilon) rotating inside the F1 region and a stationary peripheral stalk (subunits F6, b, d, and OSCP). Interacts with PRICKLE3.

It localises to the mitochondrion membrane. Its function is as follows. Subunit 8, of the mitochondrial membrane ATP synthase complex (F(1)F(0) ATP synthase or Complex V) that produces ATP from ADP in the presence of a proton gradient across the membrane which is generated by electron transport complexes of the respiratory chain. ATP synthase complex consist of a soluble F(1) head domain - the catalytic core - and a membrane F(1) domain - the membrane proton channel. These two domains are linked by a central stalk rotating inside the F(1) region and a stationary peripheral stalk. During catalysis, ATP synthesis in the catalytic domain of F(1) is coupled via a rotary mechanism of the central stalk subunits to proton translocation. In vivo, can only synthesize ATP although its ATP hydrolase activity can be activated artificially in vitro. Part of the complex F(0) domain. This is ATP synthase F(0) complex subunit 8 from Cricetulus griseus (Chinese hamster).